The primary structure comprises 480 residues: Radical SAM Nalpha-GlyT isomerase (480 aa).

Cys125, Cys129, and Cys132 together coordinate iron-sulfur cluster. The tract at residues 457–480 (KIVEPTPPEEDGGERKIIPITQID) is disordered.

It catalyses the reaction 5-N(alpha)-glycyl-dTMP in DNA + AH2 + S-adenosyl-L-methionine = 5-C(alpha)-glycyl-dTMP in DNA + 5'-deoxyadenosine + L-methionine + A + H(+). In terms of biological role, isomerizes 5-N-alpha-glycinylthymidine (Nalpha-GlyT) into 5-Calpha-glycinylthymidine (Calpha-GlyT) as a step in the pathway leading to thymidine hypermodifications in the viral genome. As a final result of the pathway of hypermodification, 5-aminoethyl-2'-deoxyuridine (5-NedU) substitutes for about 30% of thymidines in the viral DNA. These modifications probably prevent degradation of viral genome by the host restriction-modification antiviral defense system. This is Radical SAM Nalpha-GlyT isomerase from Pseudomonas phage M6.